Reading from the N-terminus, the 696-residue chain is Spindle assembly checkpoint component MAD1 (696 aa).

Disordered regions lie at residues 1-22 (MSTG…SINN) and 394-415 (QIHA…TENK). The segment covering 402-413 (KQQEQEKEENTE) has biased composition (basic and acidic residues).

It belongs to the MAD1 family. Component of the mitotic checkpoint complex (MCC).

The protein localises to the nucleus. Its function is as follows. Central component of the spindle assembly checkpoint which is a feedback control that prevents cells with incompletely assembled spindles from leaving mitosis. This is Spindle assembly checkpoint component MAD1 from Candida albicans (strain SC5314 / ATCC MYA-2876) (Yeast).